A 566-amino-acid polypeptide reads, in one-letter code: Proline--tRNA ligase (566 aa).

Belongs to the class-II aminoacyl-tRNA synthetase family. ProS type 1 subfamily. As to quaternary structure, homodimer.

The protein resides in the cytoplasm. It carries out the reaction tRNA(Pro) + L-proline + ATP = L-prolyl-tRNA(Pro) + AMP + diphosphate. Functionally, catalyzes the attachment of proline to tRNA(Pro) in a two-step reaction: proline is first activated by ATP to form Pro-AMP and then transferred to the acceptor end of tRNA(Pro). As ProRS can inadvertently accommodate and process non-cognate amino acids such as alanine and cysteine, to avoid such errors it has two additional distinct editing activities against alanine. One activity is designated as 'pretransfer' editing and involves the tRNA(Pro)-independent hydrolysis of activated Ala-AMP. The other activity is designated 'posttransfer' editing and involves deacylation of mischarged Ala-tRNA(Pro). The misacylated Cys-tRNA(Pro) is not edited by ProRS. This Bacillus anthracis (strain A0248) protein is Proline--tRNA ligase.